We begin with the raw amino-acid sequence, 591 residues long: Negative elongation factor D (591 aa).

The interval 1–44 is disordered; it reads MAGPAPGTIMGEDYFGNASEWGEEADGGQHQEDDSGEGEDDAEV. The segment covering 34-44 has biased composition (acidic residues); the sequence is DSGEGEDDAEV.

This sequence belongs to the NELF-D family. As to quaternary structure, the NELF complex is composed of NELFA, NELFB, NELFCD and NELFE; NELFA and NELFCD form a stable subcomplex that binds primarily through NELFCD to the N-terminus of NELFB. Binds RNA which may help to stabilize the NELF complex on nucleic acid. In vitro, the NELFA:NELFCD subcomplex binds to ssDNA and ssRNA in a sequence- and structure-dependent manner. Interacts with ARAF1. Interacts with PCF11. Interacts with NELFB. Interacts with KAT8.

Its subcellular location is the nucleus. Its function is as follows. Essential component of the NELF complex, a complex that negatively regulates the elongation of transcription by RNA polymerase II. The NELF complex, which acts via an association with the DSIF complex and causes transcriptional pausing, is counteracted by the P-TEFb kinase complex. The chain is Negative elongation factor D (Nelfcd) from Mus musculus (Mouse).